The sequence spans 361 residues: Replication factor C subunit 3 (361 aa).

Low complexity predominate over residues 1–28 (MAGATAATPMDIDAAAPPPGAAAKGKAP). Positions 1 to 39 (MAGATAATPMDIDAAAPPPGAAAKGKAPLSSTPGGRAAP) are disordered. 77–84 (YGPPGTGK) provides a ligand contact to ATP.

The protein belongs to the activator 1 small subunits family. As to quaternary structure, heterotetramer of subunits RFC2, RFC3, RFC4 and RFC5 that can form a complex with RFC1. Expressed in roots, leaves, shoot apical meristem (SAM), flag leaves and panicles.

Its subcellular location is the nucleus. In terms of biological role, may be involved in DNA replication and thus regulate cell proliferation. The protein is Replication factor C subunit 3 (RFC3) of Oryza sativa subsp. japonica (Rice).